Reading from the N-terminus, the 258-residue chain is Ribosomal RNA small subunit methyltransferase J (258 aa).

S-adenosyl-L-methionine-binding positions include 123–124 and aspartate 177; that span reads ER. The disordered stretch occupies residues 232–258; it reads IDGPKPSHSLEGKSSRYDIYPKKALKA. Positions 239–252 are enriched in basic and acidic residues; it reads HSLEGKSSRYDIYP.

It belongs to the methyltransferase superfamily. RsmJ family.

The protein resides in the cytoplasm. The catalysed reaction is guanosine(1516) in 16S rRNA + S-adenosyl-L-methionine = N(2)-methylguanosine(1516) in 16S rRNA + S-adenosyl-L-homocysteine + H(+). Functionally, specifically methylates the guanosine in position 1516 of 16S rRNA. This Pseudomonas putida (strain ATCC 47054 / DSM 6125 / CFBP 8728 / NCIMB 11950 / KT2440) protein is Ribosomal RNA small subunit methyltransferase J.